Consider the following 549-residue polypeptide: Nucleoporin nup61 (549 aa).

Over residues 1 to 32 (MSKRGADHQLTKDQDDSDDDRHGPVEVPKEAS) the composition is skewed to basic and acidic residues. Disordered regions lie at residues 1–57 (MSKR…VSSP), 133–193 (IEKK…GFSA), and 207–438 (FTPK…NEDS). The residue at position 17 (S17) is a Phosphoserine. The span at 40-50 (KIAKPKSRKRP) shows a compositional bias: basic residues. Positions 141–165 (QPTSNAVVSEVNPQQQKSQDSSSFV) are enriched in polar residues. Basic and acidic residues-rich tracts occupy residues 170-180 (ASSEKEDKEKP) and 217-228 (SATEAEAKEKET). The segment covering 229–244 (SSNQTATGTAATTTNQ) has biased composition (low complexity). 2 stretches are compositionally biased toward basic and acidic residues: residues 282 to 310 (ASKETKQTHETKDSKSEESKPSNNEKSEN) and 328 to 339 (KPIKFDTPEKKF). S347 carries the phosphoserine modification. Positions 407–421 (SEQEEKENGNDETRS) are enriched in basic and acidic residues. The RanBD1 domain occupies 416-549 (NDETRSNDSL…NEKKVSKSEN (134 aa)).

The protein resides in the nucleus. It localises to the nuclear pore complex. Its function is as follows. Functions as a component of the nuclear pore complex (NPC). NPC components, collectively referred to as nucleoporins (NUPs), can play the role of both NPC structural components and of docking or interaction partners for transiently associated nuclear transport factors. Active directional transport is assured by both, a Phe-Gly (FG) repeat affinity gradient for these transport factors across the NPC and a transport cofactor concentration gradient across the nuclear envelope. May play a role in mitotic spindle formation and/or function. The chain is Nucleoporin nup61 (nup61) from Schizosaccharomyces pombe (strain 972 / ATCC 24843) (Fission yeast).